The primary structure comprises 597 residues: MPDQTTSTHLFAHILARVHAVCAALTDEGALPTGTDLSRIVVEPPKDASHGDMATNAAMVLAKDAKAKPRDLAEKIAEKLRAEDQIDTVSIAGPGFINLTLKPAVWAEALRAVLDAGAGYGRSRVGGAEKVNIEYVSANPTGPMHVGHCRGAVFGDALANLLETAGYDVTREYYINDAGAQVDVLARSAFLRYREALGEDIGAIPEGLYPGDYLVPVGTALVAEHGAALKELPEPQWLPMVRAKSIAMMMEMIKADLAALAITHEVFFSERSLIEGERNRVADTIDFLRAKGDVYQGRLPPPKGAPVEDYEDREQTLFRATAYGDDVDRPLLKSDGTYTYFASDIAYHKVKFDAGFGNMVDVWGADHGGYIKRMQAAITAVTSGKGALDVKIVQLVRLLRNGEPVKMSKRSGDFVTLREVVDEVGSDAVRFMMLFRKNDAVLDFDLAKVIEQSKDNPVFYVQYGHARGHSIFRNAKELFPDLPDATEARIAFLKDANAERLTDPSELDLLRRLALFPRTVEAAALAHEPHRVAFYLYDLASEFHALWTRGRDLPHLRFIINNDAEITKARLAMVQGVVSVLASGLAILGVTAPDEMR.

The 'HIGH' region motif lies at 138-148 (ANPTGPMHVGH).

The protein belongs to the class-I aminoacyl-tRNA synthetase family. Monomer.

The protein resides in the cytoplasm. The enzyme catalyses tRNA(Arg) + L-arginine + ATP = L-arginyl-tRNA(Arg) + AMP + diphosphate. The chain is Arginine--tRNA ligase from Rhodopseudomonas palustris (strain HaA2).